We begin with the raw amino-acid sequence, 100 residues long: Ubiquinol-cytochrome-C reductase complex subunit IX, mitochondrial (100 aa).

The transit peptide at 1–30 directs the protein to the mitochondrion; that stretch reads MQTHVRRVALQALRPCLRAGLMAPKFPVRF. Residues 66–86 traverse the membrane as a helical segment; sequence LLMRLFFAFVAYVVAMKVFGA.

Plants bc1 complex contains 10 subunits; 3 respiratory subunits, 2 core proteins and 5 low-molecular weight proteins.

It localises to the mitochondrion inner membrane. In terms of biological role, this is a component of the ubiquinol-cytochrome c reductase complex (complex III or cytochrome b-c1 complex), which is part of the mitochondrial respiratory chain. The sequence is that of Ubiquinol-cytochrome-C reductase complex subunit IX, mitochondrial from Euglena gracilis.